Consider the following 1159-residue polypeptide: Reverse gyrase 2 (1159 aa).

The segment at 1–40 adopts an RG N-terminal-type zinc-finger fold; the sequence is MALELIERGCPNCGGVISSDRLEKGLPCSKCLPKPTEEKV. Cys-10, Cys-13, Cys-28, and Cys-31 together coordinate Zn(2+). ATP contacts are provided by residues Gln-82 and 99 to 106; that span reads APTGVGKT. One can recognise a Helicase ATP-binding domain in the interval 86–275; sequence AKRVFMNQSF…LFRNLLGFDV (190 aa). A DEAD box motif is present at residues 196-199; that stretch reads DDID. The interval 583–1159 is topoisomerase I; the sequence is DLFKTTLVIV…LLKEEKAFKK (577 aa). Positions 587–743 constitute a Toprim domain; it reads TTLVIVESPN…NIKRAEFHEV (157 aa). Positions 593 and 712 each coordinate Mg(2+). A Topo IA-type catalytic domain is found at 759 to 1152; the sequence is DLNLVKAQLV…EVHRIKVLLK (394 aa). Tyr-902 functions as the O-(5'-phospho-DNA)-tyrosine intermediate in the catalytic mechanism.

The protein in the N-terminal section; belongs to the DEAD box helicase family. DDVD subfamily. In the C-terminal section; belongs to the type IA topoisomerase family. Monomer. Zn(2+) is required as a cofactor. Mg(2+) serves as cofactor.

It is found in the cytoplasm. It carries out the reaction ATP + H2O = ADP + phosphate + H(+). Its function is as follows. Modifies the topological state of DNA by introducing positive supercoils in an ATP-dependent process, increasing the linking number in steps of +1. Binds to single-stranded DNA, transiently cleaves and then rejoins the ends, introducing a positive supercoil in the process. The scissile phosphodiester is attacked by the catalytic tyrosine of the enzyme, resulting in the formation of a DNA-(5'-phosphotyrosyl)-enzyme intermediate. Probably involved in rewinding DNA strands in regions of the chromosome that have opened up to allow replication, transcription, DNA repair and/or for DNA protection. The polypeptide is Reverse gyrase 2 (Aquifex aeolicus (strain VF5)).